A 122-amino-acid chain; its full sequence is Large ribosomal subunit protein uL24 (122 aa).

It belongs to the universal ribosomal protein uL24 family. In terms of assembly, part of the 50S ribosomal subunit.

Functionally, one of two assembly initiator proteins, it binds directly to the 5'-end of the 23S rRNA, where it nucleates assembly of the 50S subunit. Located at the polypeptide exit tunnel on the outside of the subunit. This chain is Large ribosomal subunit protein uL24, found in Pyrobaculum arsenaticum (strain DSM 13514 / JCM 11321 / PZ6).